A 135-amino-acid polypeptide reads, in one-letter code: Probable 5-hydroxyisourate hydrolase R09H10.3 (135 aa).

The signal sequence occupies residues 1-20 (MNKFSLFFALTATLMTITES). 3 residues coordinate substrate: His30, Arg68, and Tyr132.

This sequence belongs to the transthyretin family. 5-hydroxyisourate hydrolase subfamily. As to quaternary structure, homotetramer.

It catalyses the reaction 5-hydroxyisourate + H2O = 5-hydroxy-2-oxo-4-ureido-2,5-dihydro-1H-imidazole-5-carboxylate + H(+). In terms of biological role, catalyzes the hydrolysis of 5-hydroxyisourate (HIU) to 2-oxo-4-hydroxy-4-carboxy-5-ureidoimidazoline (OHCU). The protein is Probable 5-hydroxyisourate hydrolase R09H10.3 of Caenorhabditis elegans.